A 227-amino-acid polypeptide reads, in one-letter code: 2-C-methyl-D-erythritol 4-phosphate cytidylyltransferase (227 aa).

This sequence belongs to the IspD/TarI cytidylyltransferase family. IspD subfamily.

The catalysed reaction is 2-C-methyl-D-erythritol 4-phosphate + CTP + H(+) = 4-CDP-2-C-methyl-D-erythritol + diphosphate. It participates in isoprenoid biosynthesis; isopentenyl diphosphate biosynthesis via DXP pathway; isopentenyl diphosphate from 1-deoxy-D-xylulose 5-phosphate: step 2/6. Catalyzes the formation of 4-diphosphocytidyl-2-C-methyl-D-erythritol from CTP and 2-C-methyl-D-erythritol 4-phosphate (MEP). This chain is 2-C-methyl-D-erythritol 4-phosphate cytidylyltransferase, found in Nostoc punctiforme (strain ATCC 29133 / PCC 73102).